We begin with the raw amino-acid sequence, 343 residues long: RNA-binding protein 43 (343 aa).

An RRM domain is found at 15 to 90 (RTVVVSGLPV…PRLTVSHFSE (76 aa)).

The protein is RNA-binding protein 43 (Rbm43) of Mus musculus (Mouse).